A 446-amino-acid chain; its full sequence is Probable ribosomal RNA small subunit methyltransferase B (446 aa).

S-adenosyl-L-methionine is bound by residues 260–266 (CAAPGGK), aspartate 284, aspartate 311, and aspartate 330. Residue cysteine 383 is the Nucleophile of the active site.

This sequence belongs to the class I-like SAM-binding methyltransferase superfamily. RsmB/NOP family.

The protein resides in the cytoplasm. The catalysed reaction is cytidine(967) in 16S rRNA + S-adenosyl-L-methionine = 5-methylcytidine(967) in 16S rRNA + S-adenosyl-L-homocysteine + H(+). Its function is as follows. Specifically methylates the cytosine at position 967 (m5C967) of 16S rRNA. The chain is Probable ribosomal RNA small subunit methyltransferase B from Synechocystis sp. (strain ATCC 27184 / PCC 6803 / Kazusa).